Reading from the N-terminus, the 312-residue chain is Glyoxylate/hydroxypyruvate reductase A (312 aa).

Arginine 227 is an active-site residue. Histidine 275 (proton donor) is an active-site residue.

Belongs to the D-isomer specific 2-hydroxyacid dehydrogenase family. GhrA subfamily.

It is found in the cytoplasm. The enzyme catalyses glycolate + NADP(+) = glyoxylate + NADPH + H(+). It carries out the reaction (R)-glycerate + NAD(+) = 3-hydroxypyruvate + NADH + H(+). The catalysed reaction is (R)-glycerate + NADP(+) = 3-hydroxypyruvate + NADPH + H(+). In terms of biological role, catalyzes the NADPH-dependent reduction of glyoxylate and hydroxypyruvate into glycolate and glycerate, respectively. The protein is Glyoxylate/hydroxypyruvate reductase A of Klebsiella pneumoniae subsp. pneumoniae (strain ATCC 700721 / MGH 78578).